A 402-amino-acid polypeptide reads, in one-letter code: Endo-polygalacturonase (402 aa).

The N-terminal stretch at 1 to 23 (MEYQSGKRVLSLSLGLIGLFSAS) is a signal peptide. Asp249 (proton donor) is an active-site residue. The active site involves His277.

Belongs to the glycosyl hydrolase 28 family. As to quaternary structure, monomer.

Its subcellular location is the secreted. It carries out the reaction (1,4-alpha-D-galacturonosyl)n+m + H2O = (1,4-alpha-D-galacturonosyl)n + (1,4-alpha-D-galacturonosyl)m.. Functionally, involved in maceration and soft-rotting of plant tissue. This Pectobacterium carotovorum subsp. carotovorum (Erwinia carotovora subsp. carotovora) protein is Endo-polygalacturonase (peh).